The chain runs to 378 residues: Holliday junction branch migration complex subunit RuvB 1 (378 aa).

Over residues 1 to 12 (MAIISSRDTGQN) the composition is skewed to polar residues. The interval 1–62 (MAIISSRDTG…PGEAQEESLR (62 aa)) is disordered. The tract at residues 13–222 (AEGPKRRQQK…FGHVQRLRFY (210 aa)) is large ATPase domain (RuvB-L). Residues Leu61, Arg62, Gly103, Lys106, Thr107, Thr108, 169-171 (EDF), Arg212, Tyr222, and Arg259 contribute to the ATP site. Thr107 serves as a coordination point for Mg(2+). The tract at residues 223 to 293 (EPHELVQIVL…VAAAALELFQ (71 aa)) is small ATPAse domain (RuvB-S). The segment at 296–378 (PMGLDWIDRK…EAQSPLPLWS (83 aa)) is head domain (RuvB-H). DNA-binding residues include Arg351 and Arg356.

Belongs to the RuvB family. In terms of assembly, homohexamer. Forms an RuvA(8)-RuvB(12)-Holliday junction (HJ) complex. HJ DNA is sandwiched between 2 RuvA tetramers; dsDNA enters through RuvA and exits via RuvB. An RuvB hexamer assembles on each DNA strand where it exits the tetramer. Each RuvB hexamer is contacted by two RuvA subunits (via domain III) on 2 adjacent RuvB subunits; this complex drives branch migration. In the full resolvosome a probable DNA-RuvA(4)-RuvB(12)-RuvC(2) complex forms which resolves the HJ.

It localises to the cytoplasm. It carries out the reaction ATP + H2O = ADP + phosphate + H(+). Functionally, the RuvA-RuvB-RuvC complex processes Holliday junction (HJ) DNA during genetic recombination and DNA repair, while the RuvA-RuvB complex plays an important role in the rescue of blocked DNA replication forks via replication fork reversal (RFR). RuvA specifically binds to HJ cruciform DNA, conferring on it an open structure. The RuvB hexamer acts as an ATP-dependent pump, pulling dsDNA into and through the RuvAB complex. RuvB forms 2 homohexamers on either side of HJ DNA bound by 1 or 2 RuvA tetramers; 4 subunits per hexamer contact DNA at a time. Coordinated motions by a converter formed by DNA-disengaged RuvB subunits stimulates ATP hydrolysis and nucleotide exchange. Immobilization of the converter enables RuvB to convert the ATP-contained energy into a lever motion, pulling 2 nucleotides of DNA out of the RuvA tetramer per ATP hydrolyzed, thus driving DNA branch migration. The RuvB motors rotate together with the DNA substrate, which together with the progressing nucleotide cycle form the mechanistic basis for DNA recombination by continuous HJ branch migration. Branch migration allows RuvC to scan DNA until it finds its consensus sequence, where it cleaves and resolves cruciform DNA. The protein is Holliday junction branch migration complex subunit RuvB 1 of Synechococcus sp. (strain JA-3-3Ab) (Cyanobacteria bacterium Yellowstone A-Prime).